The following is a 172-amino-acid chain: Co-chaperone protein HscB (172 aa).

Residues 2–74 (DYFTLFGLPI…LKRAEYMLSL (73 aa)) form the J domain.

It belongs to the HscB family. As to quaternary structure, interacts with HscA and stimulates its ATPase activity. Interacts with IscU.

Co-chaperone involved in the maturation of iron-sulfur cluster-containing proteins. Seems to help targeting proteins to be folded toward HscA. The sequence is that of Co-chaperone protein HscB from Pectobacterium carotovorum subsp. carotovorum (strain PC1).